A 136-amino-acid polypeptide reads, in one-letter code: S-protein homolog 6 (136 aa).

Residues 1-17 form the signal peptide; sequence MFIIIFIVLISLIGCET. N-linked (GlcNAc...) asparagine glycans are attached at residues N76 and N108.

This sequence belongs to the plant self-incompatibility (S1) protein family.

It localises to the secreted. This chain is S-protein homolog 6, found in Arabidopsis thaliana (Mouse-ear cress).